A 468-amino-acid chain; its full sequence is Efflux pump azaK (468 aa).

Positions 1 to 30 (MTVHPPAVADETSPLLPSQDGPGHNGIVPA) are disordered. 6 helical membrane-spanning segments follow: residues 43–65 (QVAL…FPFV), 80–100 (VGFY…MLMI), 112–132 (KPVL…FGFS), 135–155 (LGQM…VVTV), 174–194 (YFSL…GALC), and 207–227 (LPTV…LMFV). The N-linked (GlcNAc...) asparagine glycan is linked to Asn228. 6 helical membrane-spanning segments follow: residues 257-277 (VLPV…YTAV), 296-316 (FYIS…LVLV), 329-349 (ILRG…GASV), 357-377 (VAFW…AMQL), 387-407 (VSPS…IISF), and 429-449 (PGFY…AFTL).

Belongs to the major facilitator superfamily.

It is found in the cell membrane. Functionally, efflux pump that might be required for efficient secretion of azaphilones. The polypeptide is Efflux pump azaK (Aspergillus niger (strain ATCC 1015 / CBS 113.46 / FGSC A1144 / LSHB Ac4 / NCTC 3858a / NRRL 328 / USDA 3528.7)).